The primary structure comprises 139 residues: MATIAQLIRKPRKKKKVKSKSPALHYNLNLLNKKVTNVYSPLKRGVCTRVGTMTPKKPNSALRKYAKVRLTNGFEVLTYIPGEGHNLQEHSVTLLRGGRVKDLPGVRYHIVRGTLDTVGVEKRRQQRSAYGAKKPKAKS.

Belongs to the universal ribosomal protein uS12 family. Part of the 30S ribosomal subunit. Contacts proteins S8 and S17. May interact with IF1 in the 30S initiation complex.

Its function is as follows. With S4 and S5 plays an important role in translational accuracy. Functionally, interacts with and stabilizes bases of the 16S rRNA that are involved in tRNA selection in the A site and with the mRNA backbone. Located at the interface of the 30S and 50S subunits, it traverses the body of the 30S subunit contacting proteins on the other side and probably holding the rRNA structure together. The combined cluster of proteins S8, S12 and S17 appears to hold together the shoulder and platform of the 30S subunit. The polypeptide is Small ribosomal subunit protein uS12 (Mycoplasma pneumoniae (strain ATCC 29342 / M129 / Subtype 1) (Mycoplasmoides pneumoniae)).